A 406-amino-acid polypeptide reads, in one-letter code: uncharacterized protein (406 aa).

This is an uncharacterized protein from Aquifex aeolicus (strain VF5).